Consider the following 154-residue polypeptide: Cold shock domain-containing protein C2 (154 aa).

Ser19 bears the Phosphoserine mark. A disordered region spans residues 38–62 (GGGIAPRDLPSPLPTKRTRTYSATA). In terms of domain architecture, CSD spans 69–136 (VFKGVCKQFS…KFQAVEVVLT (68 aa)).

The protein resides in the nucleus. It is found in the cytoplasm. Its function is as follows. RNA-binding factor which binds specifically to the very 3'-UTR ends of both histone H1 and H3.3 mRNAs, encompassing the polyadenylation signal. Might play a central role in the negative regulation of histone variant synthesis in the developing brain. The chain is Cold shock domain-containing protein C2 (Csdc2) from Mus musculus (Mouse).